Here is a 461-residue protein sequence, read N- to C-terminus: MSKIHAVVLAAGQGTRMKSKLYKVLHPVCGKPMVQHVVDTMASMQVQDIVVVVGHGADAVRAKLGEDVTYALQEEQLGTAHAVSQAAPFLQDKEGTTFLLYGDVPLLSATTLSALLTYHEEQQAAATVLTAVLPDATGYGRIVRNEAGEVLRIVEHKDASEAERAIREINTGIYCYDNRKLWKALAEVKNDNAQGEYYVTDVVGILRDAGEKVVGYEAIDPEETLGVNDRVQLSEAEAYMKKRIMTGHMRNGVTIIDPTSTYIETDVKIEADTVIHPGSFLRGQTTVGADCVIGPQADLTNVEVASGVTISYSVMVDSRVESDSSVGPFAYVRPGSQIGSNAKIGDFVELKNAKIGDGTKVPHLSYVGDAEIGDGVNIGCGTITVNYDGAVKHKTTVKDGAFIGCNSNLVAPVTVGQNAYVAAGSTINQDVPDNALAIARERQVNKIDYANKMPRKGKKQS.

Residues 1–230 form a pyrophosphorylase region; it reads MSKIHAVVLA…PEETLGVNDR (230 aa). Residues 9–12, lysine 23, glutamine 73, 78–79, 101–103, glycine 140, glutamate 155, asparagine 170, and asparagine 228 contribute to the UDP-N-acetyl-alpha-D-glucosamine site; these read LAAG, GT, and YGD. Aspartate 103 provides a ligand contact to Mg(2+). Position 228 (asparagine 228) interacts with Mg(2+). Positions 231–251 are linker; it reads VQLSEAEAYMKKRIMTGHMRN. The segment at 252–461 is N-acetyltransferase; it reads GVTIIDPTST…KMPRKGKKQS (210 aa). UDP-N-acetyl-alpha-D-glucosamine is bound by residues arginine 333 and lysine 351. The Proton acceptor role is filled by histidine 363. Residues tyrosine 366 and asparagine 377 each coordinate UDP-N-acetyl-alpha-D-glucosamine. Acetyl-CoA contacts are provided by residues 386–387, alanine 423, and arginine 440; that span reads NY.

It in the N-terminal section; belongs to the N-acetylglucosamine-1-phosphate uridyltransferase family. In the C-terminal section; belongs to the transferase hexapeptide repeat family. In terms of assembly, homotrimer. The cofactor is Mg(2+).

The protein localises to the cytoplasm. The catalysed reaction is alpha-D-glucosamine 1-phosphate + acetyl-CoA = N-acetyl-alpha-D-glucosamine 1-phosphate + CoA + H(+). The enzyme catalyses N-acetyl-alpha-D-glucosamine 1-phosphate + UTP + H(+) = UDP-N-acetyl-alpha-D-glucosamine + diphosphate. It participates in nucleotide-sugar biosynthesis; UDP-N-acetyl-alpha-D-glucosamine biosynthesis; N-acetyl-alpha-D-glucosamine 1-phosphate from alpha-D-glucosamine 6-phosphate (route II): step 2/2. The protein operates within nucleotide-sugar biosynthesis; UDP-N-acetyl-alpha-D-glucosamine biosynthesis; UDP-N-acetyl-alpha-D-glucosamine from N-acetyl-alpha-D-glucosamine 1-phosphate: step 1/1. It functions in the pathway bacterial outer membrane biogenesis; LPS lipid A biosynthesis. Its function is as follows. Catalyzes the last two sequential reactions in the de novo biosynthetic pathway for UDP-N-acetylglucosamine (UDP-GlcNAc). The C-terminal domain catalyzes the transfer of acetyl group from acetyl coenzyme A to glucosamine-1-phosphate (GlcN-1-P) to produce N-acetylglucosamine-1-phosphate (GlcNAc-1-P), which is converted into UDP-GlcNAc by the transfer of uridine 5-monophosphate (from uridine 5-triphosphate), a reaction catalyzed by the N-terminal domain. This Brevibacillus brevis (strain 47 / JCM 6285 / NBRC 100599) protein is Bifunctional protein GlmU.